The primary structure comprises 216 residues: Octanoyltransferase (216 aa).

The region spanning 32–207 (PDSQDEIWLV…QLVKHLDYAE (176 aa)) is the BPL/LPL catalytic domain. Substrate contacts are provided by residues 71 to 78 (RGGQVTYH), 138 to 140 (SLG), and 151 to 153 (GLA). The Acyl-thioester intermediate role is filled by cysteine 169.

Belongs to the LipB family.

It localises to the cytoplasm. The enzyme catalyses octanoyl-[ACP] + L-lysyl-[protein] = N(6)-octanoyl-L-lysyl-[protein] + holo-[ACP] + H(+). It functions in the pathway protein modification; protein lipoylation via endogenous pathway; protein N(6)-(lipoyl)lysine from octanoyl-[acyl-carrier-protein]: step 1/2. Its function is as follows. Catalyzes the transfer of endogenously produced octanoic acid from octanoyl-acyl-carrier-protein onto the lipoyl domains of lipoate-dependent enzymes. Lipoyl-ACP can also act as a substrate although octanoyl-ACP is likely to be the physiological substrate. In Pseudomonas putida (strain ATCC 47054 / DSM 6125 / CFBP 8728 / NCIMB 11950 / KT2440), this protein is Octanoyltransferase.